Consider the following 343-residue polypeptide: Anthranilate phosphoribosyltransferase (343 aa).

5-phospho-alpha-D-ribose 1-diphosphate contacts are provided by residues G79, 82 to 83 (GD), T87, 89 to 92 (NVST), 106 to 114 (KHGNRAASS), and S118. Position 79 (G79) interacts with anthranilate. S91 lines the Mg(2+) pocket. N109 is a binding site for anthranilate. R164 provides a ligand contact to anthranilate. Mg(2+) is bound by residues D223 and E224.

This sequence belongs to the anthranilate phosphoribosyltransferase family. As to quaternary structure, homodimer. Mg(2+) serves as cofactor.

The catalysed reaction is N-(5-phospho-beta-D-ribosyl)anthranilate + diphosphate = 5-phospho-alpha-D-ribose 1-diphosphate + anthranilate. The protein operates within amino-acid biosynthesis; L-tryptophan biosynthesis; L-tryptophan from chorismate: step 2/5. Functionally, catalyzes the transfer of the phosphoribosyl group of 5-phosphorylribose-1-pyrophosphate (PRPP) to anthranilate to yield N-(5'-phosphoribosyl)-anthranilate (PRA). The chain is Anthranilate phosphoribosyltransferase from Metallosphaera sedula (strain ATCC 51363 / DSM 5348 / JCM 9185 / NBRC 15509 / TH2).